The sequence spans 104 residues: PLAT domain-containing protein 3 (104 aa).

The PLAT domain maps to 1 to 104; it reads MSLRLYDSYG…LARDASPYEL (104 aa).

The protein is PLAT domain-containing protein 3 of Arabidopsis thaliana (Mouse-ear cress).